A 210-amino-acid polypeptide reads, in one-letter code: Dephospho-CoA kinase (210 aa).

In terms of domain architecture, DPCK spans 4–202; sequence WVGLTGGIGS…AFYSGIFASK (199 aa). 12–17 provides a ligand contact to ATP; the sequence is GSGKSA.

This sequence belongs to the CoaE family.

The protein resides in the cytoplasm. It carries out the reaction 3'-dephospho-CoA + ATP = ADP + CoA + H(+). It functions in the pathway cofactor biosynthesis; coenzyme A biosynthesis; CoA from (R)-pantothenate: step 5/5. In terms of biological role, catalyzes the phosphorylation of the 3'-hydroxyl group of dephosphocoenzyme A to form coenzyme A. This chain is Dephospho-CoA kinase, found in Neisseria meningitidis serogroup A / serotype 4A (strain DSM 15465 / Z2491).